Here is a 381-residue protein sequence, read N- to C-terminus: Succinyl-diaminopimelate desuccinylase (381 aa).

H69 lines the Zn(2+) pocket. D71 is a catalytic residue. D103 contributes to the Zn(2+) binding site. The Proton acceptor role is filled by E137. Zn(2+) contacts are provided by E138, E166, and H355.

Belongs to the peptidase M20A family. DapE subfamily. Homodimer. It depends on Zn(2+) as a cofactor. The cofactor is Co(2+).

It carries out the reaction N-succinyl-(2S,6S)-2,6-diaminopimelate + H2O = (2S,6S)-2,6-diaminopimelate + succinate. The protein operates within amino-acid biosynthesis; L-lysine biosynthesis via DAP pathway; LL-2,6-diaminopimelate from (S)-tetrahydrodipicolinate (succinylase route): step 3/3. Functionally, catalyzes the hydrolysis of N-succinyl-L,L-diaminopimelic acid (SDAP), forming succinate and LL-2,6-diaminopimelate (DAP), an intermediate involved in the bacterial biosynthesis of lysine and meso-diaminopimelic acid, an essential component of bacterial cell walls. This Rickettsia akari (strain Hartford) protein is Succinyl-diaminopimelate desuccinylase.